Reading from the N-terminus, the 99-residue chain is Small integral membrane protein 14 (99 aa).

At 1 to 49 (MAEGGFDPCECVCSHEHAMRRLINLLRQSQSYCTDTECLQELPGPSGDN) the chain is on the lumenal side. A helical membrane pass occupies residues 50 to 70 (GISVTMILVAWMVIALILFLL). The Cytoplasmic portion of the chain corresponds to 71–99 (RPPNLRGSNLPGKPTSPHNGQDPPAPPVD). Residues 77 to 99 (GSNLPGKPTSPHNGQDPPAPPVD) form a disordered region.

The protein resides in the endoplasmic reticulum membrane. The sequence is that of Small integral membrane protein 14 (SMIM14) from Pongo abelii (Sumatran orangutan).